The following is a 519-amino-acid chain: Putative glucosylceramidase 4 (519 aa).

The N-terminal stretch at 1 to 24 (MILNISVSLLIFLAFYGFSSDAKS) is a signal peptide. Catalysis depends on Glu256, which acts as the Proton donor. Glu361 serves as the catalytic Nucleophile.

Belongs to the glycosyl hydrolase 30 family.

The catalysed reaction is a beta-D-glucosylceramide + H2O = an N-acyl-sphingoid base + D-glucose. The enzyme catalyses a beta-D-glucosyl-(1&lt;-&gt;1')-N-acylsphing-4-enine + H2O = an N-acylsphing-4-enine + D-glucose. It carries out the reaction an N-acyl-1-beta-D-glucosyl-15-methylhexadecasphing-4-enine + H2O = an N-acyl-15-methylhexadecasphing-4-enine + D-glucose. It participates in lipid metabolism; sphingolipid metabolism. Functionally, glucosylceramidase that catalyzes the hydrolysis of glucosylceramides into free ceramides and glucose. C.elegans contains specific sphingoid bases, which are unique or different in structure compared to the sphingoid bases found in other animals. Two examples of these distinctive compounds are: 15-methylhexadecasphinganine and 15-methylhexadecasphing-4-enine. The chain is Putative glucosylceramidase 4 (gba-4) from Caenorhabditis elegans.